The sequence spans 435 residues: Histidinol dehydrogenase (435 aa).

Residues Tyr131, Gln189, and Asn212 each contribute to the NAD(+) site. Substrate is bound by residues Ser238, Gln260, and His263. Residues Gln260 and His263 each contribute to the Zn(2+) site. Catalysis depends on proton acceptor residues Glu327 and His328. Residues His328, Asp361, Glu415, and His420 each contribute to the substrate site. A Zn(2+)-binding site is contributed by Asp361. A Zn(2+)-binding site is contributed by His420.

Belongs to the histidinol dehydrogenase family. As to quaternary structure, homodimer. Zn(2+) is required as a cofactor.

It carries out the reaction L-histidinol + 2 NAD(+) + H2O = L-histidine + 2 NADH + 3 H(+). The protein operates within amino-acid biosynthesis; L-histidine biosynthesis; L-histidine from 5-phospho-alpha-D-ribose 1-diphosphate: step 9/9. Functionally, catalyzes the sequential NAD-dependent oxidations of L-histidinol to L-histidinaldehyde and then to L-histidine. This is Histidinol dehydrogenase (hisD) from Buchnera aphidicola subsp. Acyrthosiphon pisum (strain APS) (Acyrthosiphon pisum symbiotic bacterium).